A 903-amino-acid polypeptide reads, in one-letter code: HTH-type transcriptional regulator MalT (903 aa).

39 to 46 (CPAGYGKT) contacts ATP. The 66-residue stretch at 832–897 (ELIRTSPLTQ…EAVQQAQRLL (66 aa)) folds into the HTH luxR-type domain. The H-T-H motif DNA-binding region spans 856 to 875 (NDQIANELDVAATTIKTHIR).

Belongs to the MalT family. As to quaternary structure, monomer in solution. Oligomerizes to an active state in the presence of the positive effectors ATP and maltotriose.

Its activity is regulated as follows. Activated by ATP and maltotriose, which are both required for DNA binding. In terms of biological role, positively regulates the transcription of the maltose regulon whose gene products are responsible for uptake and catabolism of malto-oligosaccharides. Specifically binds to the promoter region of its target genes, recognizing a short DNA motif called the MalT box. The sequence is that of HTH-type transcriptional regulator MalT from Yersinia pseudotuberculosis serotype O:1b (strain IP 31758).